We begin with the raw amino-acid sequence, 481 residues long: Glutamate--glyoxylate aminotransferase 1 (481 aa).

N6-(pyridoxal phosphate)lysine is present on K291. The Peroxisomal targeting signal signature appears at 479-481 (SKM).

Belongs to the class-I pyridoxal-phosphate-dependent aminotransferase family. Alanine aminotransferase subfamily. As to quaternary structure, homodimer. Requires pyridoxal 5'-phosphate as cofactor. In terms of processing, the N-terminus is blocked. Mostly expressed in leaves, and, to a lower extent, in shoots, stems, flowers, seedlings and green siliques.

Its subcellular location is the peroxisome. The catalysed reaction is L-alanine + 2-oxoglutarate = pyruvate + L-glutamate. It catalyses the reaction glyoxylate + L-alanine = glycine + pyruvate. The enzyme catalyses glycine + 2-oxoglutarate = glyoxylate + L-glutamate. It participates in amino-acid biosynthesis; glycine biosynthesis; glycine from glyoxylate: step 1/1. Its pathway is photosynthesis; C4 acid pathway. It functions in the pathway amino-acid degradation; L-alanine degradation via transaminase pathway; pyruvate from L-alanine: step 1/1. Functionally, catalyzes the glutamate:glyoxylate (GGT or GGAT), alanine:glyoxylate (AGT), alanine:2-oxoglutarate (AKT) and glutamate:pyruvate (GPT) aminotransferase reactions in peroxisomes. Required for abscisic acid (ABA)- and stress-mediated responses in an H(2)O(2)-dependent manner. Functions as a photorespiratory aminotransferase that modulates amino acid content during photorespiration (GGAT activity); promotes serine, glycine and citrulline metabolism in response to light. This chain is Glutamate--glyoxylate aminotransferase 1 (GGAT1), found in Arabidopsis thaliana (Mouse-ear cress).